A 110-amino-acid chain; its full sequence is UPF0060 membrane protein Ajs_2087 (110 aa).

Transmembrane regions (helical) follow at residues 7-27 (LALFLLTAVAEIVGCYLPWLW), 33-53 (SAWLLVPAAASLALFAWLLTL), 63-83 (AAYGGVYVAVALVWLWTVDGV), and 86-106 (GPWDWLGVAVTLCGMAIIAFA).

Belongs to the UPF0060 family.

The protein localises to the cell inner membrane. This is UPF0060 membrane protein Ajs_2087 from Acidovorax sp. (strain JS42).